We begin with the raw amino-acid sequence, 271 residues long: 60 kDa heat shock protein, mitochondrial (271 aa).

Ser-30 and Ser-33 each carry phosphoserine. 50 to 54 (DGTTT) provides a ligand contact to ATP. Residue Lys-83 is modified to N6-acetyllysine. N6-acetyllysine; alternate occurs at positions 84, 97, and 112. Residues Lys-84, Lys-97, and Lys-112 each carry the N6-succinyllysine; alternate modification. Lys-125 carries the post-translational modification N6-acetyllysine. Residue Lys-126 is modified to N6-acetyllysine; alternate. Lys-126 is subject to N6-succinyllysine; alternate. The residue at position 145 (Lys-145) is an N6-acetyllysine. Lys-175 is modified (N6-succinyllysine). N6-acetyllysine is present on residues Lys-188 and Lys-237. Residue Gly-257 coordinates ATP. Lys-270 carries the post-translational modification N6-acetyllysine.

Belongs to the chaperonin (HSP60) family. In terms of assembly, homoheptamer arranged in a ring structure. The functional units of these chaperonins consist of heptameric rings of the large subunit Hsp60, which function as a back-to-back double ring. Interacts with 2 heptameric Hsp10 rings to form the symmetrical football complex. Interacts with HRAS. Interacts with ATAD3A. Interacts with ETFBKMT and EEF1AKMT3. Interacts with MFHAS1. As to expression, detected at higher levels in caput epididymal spermatazoa than in cauda epididymal spermatazoa (at protein level).

The protein localises to the mitochondrion matrix. It catalyses the reaction ATP + H2O + a folded polypeptide = ADP + phosphate + an unfolded polypeptide.. Its function is as follows. Chaperonin implicated in mitochondrial protein import and macromolecular assembly. Together with Hsp10, facilitates the correct folding of imported proteins. May also prevent misfolding and promote the refolding and proper assembly of unfolded polypeptides generated under stress conditions in the mitochondrial matrix. The functional units of these chaperonins consist of heptameric rings of the large subunit Hsp60, which function as a back-to-back double ring. In a cyclic reaction, Hsp60 ring complexes bind one unfolded substrate protein per ring, followed by the binding of ATP and association with 2 heptameric rings of the co-chaperonin Hsp10. This leads to sequestration of the substrate protein in the inner cavity of Hsp60 where, for a certain period of time, it can fold undisturbed by other cell components. Synchronous hydrolysis of ATP in all Hsp60 subunits results in the dissociation of the chaperonin rings and the release of ADP and the folded substrate protein. In Mesocricetus auratus (Golden hamster), this protein is 60 kDa heat shock protein, mitochondrial.